The sequence spans 164 residues: Large ribosomal subunit protein uL10 (164 aa).

It belongs to the universal ribosomal protein uL10 family. In terms of assembly, part of the ribosomal stalk of the 50S ribosomal subunit. The N-terminus interacts with L11 and the large rRNA to form the base of the stalk. The C-terminus forms an elongated spine to which L12 dimers bind in a sequential fashion forming a multimeric L10(L12)X complex.

Forms part of the ribosomal stalk, playing a central role in the interaction of the ribosome with GTP-bound translation factors. This Photobacterium profundum (strain SS9) protein is Large ribosomal subunit protein uL10.